Here is a 91-residue protein sequence, read N- to C-terminus: Small ribosomal subunit protein uS17 (91 aa).

The protein belongs to the universal ribosomal protein uS17 family. As to quaternary structure, part of the 30S ribosomal subunit.

Functionally, one of the primary rRNA binding proteins, it binds specifically to the 5'-end of 16S ribosomal RNA. This is Small ribosomal subunit protein uS17 from Thermobifida fusca (strain YX).